Consider the following 214-residue polypeptide: tRNA (guanine-N(7)-)-methyltransferase (214 aa).

S-adenosyl-L-methionine contacts are provided by E44, D69, D96, and D118. D118 is a catalytic residue. K122 contacts substrate. Residues 124–129 (KHEKRR) are interaction with RNA. Residues D154 and 191-194 (TEYE) contribute to the substrate site.

This sequence belongs to the class I-like SAM-binding methyltransferase superfamily. TrmB family.

It catalyses the reaction guanosine(46) in tRNA + S-adenosyl-L-methionine = N(7)-methylguanosine(46) in tRNA + S-adenosyl-L-homocysteine. Its pathway is tRNA modification; N(7)-methylguanine-tRNA biosynthesis. Functionally, catalyzes the formation of N(7)-methylguanine at position 46 (m7G46) in tRNA. In Enterococcus faecalis (strain ATCC 700802 / V583), this protein is tRNA (guanine-N(7)-)-methyltransferase.